A 115-amino-acid chain; its full sequence is uncharacterized protein (115 aa).

3 consecutive transmembrane segments (helical) span residues 1–21 (MFLAGVLCMCAAAASALFGSW), 33–53 (ALALRAMAPTQLAAAVMLAAG), and 54–74 (GVVAVAAPGHTALMVVIVCIA).

The protein to M.leprae ML0030.

Its subcellular location is the cell membrane. This is an uncharacterized protein from Mycobacterium tuberculosis (strain CDC 1551 / Oshkosh).